The following is a 362-amino-acid chain: Aspartate-semialdehyde dehydrogenase (362 aa).

Residues T15, G16, A17, V18, S40, S43, L87, and D88 each contribute to the NADP(+) site. C154 acts as the Acyl-thioester intermediate in catalysis. G186 provides a ligand contact to NADP(+). H251 acts as the Proton acceptor in catalysis. N340 lines the NADP(+) pocket.

This sequence belongs to the aspartate-semialdehyde dehydrogenase family. As to quaternary structure, homotetramer; dimer of dimers.

It localises to the cytoplasm. Its subcellular location is the cytosol. It is found in the nucleus. It catalyses the reaction L-aspartate 4-semialdehyde + phosphate + NADP(+) = 4-phospho-L-aspartate + NADPH + H(+). It participates in amino-acid biosynthesis; L-methionine biosynthesis via de novo pathway; L-homoserine from L-aspartate: step 2/3. Its pathway is amino-acid biosynthesis; L-threonine biosynthesis; L-threonine from L-aspartate: step 2/5. Its function is as follows. Catalyzes the NADPH-dependent formation of L-aspartate 4-semialdehyde (L-ASA) by the reductive dephosphorylation of 4-phospho-L-aspartate. Mediates the second step in the biosynthesis of amino acids that derive from aspartate (the aspartate family of amino acids), including methioinine and threonine, the latter of which is a precursor to isoleucine. In Trichophyton rubrum (strain ATCC MYA-4607 / CBS 118892) (Athlete's foot fungus), this protein is Aspartate-semialdehyde dehydrogenase.